A 309-amino-acid polypeptide reads, in one-letter code: Taste receptor type 2 member 113 (309 aa).

Over 1-8 (MVAVLQST) the chain is Extracellular. Residues 9–29 (FAIIFSMEFIVGTLGNGFIIL) traverse the membrane as a helical segment. Over 30-55 (MTCIDWVRRRKISLVDQILTALAITR) the chain is Cytoplasmic. Residues 56–76 (ITLILLVFIDWWVSVLFPALH) traverse the membrane as a helical segment. Residues 77–101 (ETGKILRMYFISWTVINHCNLWLTA) lie on the Extracellular side of the membrane. Residues 102-122 (SLSIIYFLKIASFSSIIFLYL) traverse the membrane as a helical segment. The Cytoplasmic portion of the chain corresponds to 123-127 (KFRVK). The chain crosses the membrane as a helical span at residues 128–148 (NVVFVTLLVSLFFLFINTAIV). The Extracellular portion of the chain corresponds to 149 to 185 (NVYFDVCFDGVQRNVSQVSRLYNHEQICKFLSFTNPM). Residue N162 is glycosylated (N-linked (GlcNAc...) asparagine). Residues 186–206 (FAFIPFVTSMATFFLLIFSLW) form a helical membrane-spanning segment. Over 207–229 (RHLKNMKHNAEGCRDVSTIVHIR) the chain is Cytoplasmic. A helical transmembrane segment spans residues 230–250 (ALQTIIVSVVLYSTFFLSFFV). Topologically, residues 251 to 262 (KVWSSGSPERYL) are extracellular. The helical transmembrane segment at 263 to 283 (IFLFVWALGNAVLPAHTFVLI) threads the bilayer. Residues 284-309 (WGNCRLRWASLSLMLWLRYRFKNIDV) are Cytoplasmic-facing.

Belongs to the G-protein coupled receptor T2R family.

The protein localises to the membrane. Its function is as follows. Putative taste receptor which may play a role in the perception of bitterness. The sequence is that of Taste receptor type 2 member 113 from Rattus norvegicus (Rat).